A 129-amino-acid chain; its full sequence is Fluoride-specific ion channel FluC 2 (129 aa).

4 helical membrane passes run 9–29 (LGTL…RYLL), 37–57 (GTIL…YYVI), 74–94 (MVGA…LSTF), and 100–120 (YLLI…ILGI). Na(+) is bound by residues Gly76 and Thr79.

It belongs to the fluoride channel Fluc/FEX (TC 1.A.43) family.

Its subcellular location is the cell membrane. The enzyme catalyses fluoride(in) = fluoride(out). With respect to regulation, na(+) is not transported, but it plays an essential structural role and its presence is essential for fluoride channel function. Its function is as follows. Fluoride-specific ion channel. Important for reducing fluoride concentration in the cell, thus reducing its toxicity. The protein is Fluoride-specific ion channel FluC 2 of Ligilactobacillus salivarius (strain UCC118) (Lactobacillus salivarius).